We begin with the raw amino-acid sequence, 378 residues long: Phospho-N-acetylmuramoyl-pentapeptide-transferase (378 aa).

Transmembrane regions (helical) follow at residues 27–47, 74–94, 96–116, 135–155, 184–204, 216–236, 256–276, 280–300, 305–325, and 355–375; these read TAFASLTALFLCIALGPWLIN, TMGGVLIVISIVIPTLLWADL, YPYVWIALAGLLGYGWIGFLD, LVYQFIMGFAFAASLLVMRAY, WTYVIGVAPFCIFVALVVVFY, GLAIGLMVIAAGALTVLAYAG, LTIFCGSMTGASLGFLWYNAH, IFMGDVGSLGLGGAMAVVAVL, ILLLFIGGIFVLEAFSVILQV, and KIIARFWIAGLVLALFALTTL.

It belongs to the glycosyltransferase 4 family. MraY subfamily. It depends on Mg(2+) as a cofactor.

The protein resides in the cell inner membrane. It catalyses the reaction UDP-N-acetyl-alpha-D-muramoyl-L-alanyl-gamma-D-glutamyl-meso-2,6-diaminopimeloyl-D-alanyl-D-alanine + di-trans,octa-cis-undecaprenyl phosphate = di-trans,octa-cis-undecaprenyl diphospho-N-acetyl-alpha-D-muramoyl-L-alanyl-D-glutamyl-meso-2,6-diaminopimeloyl-D-alanyl-D-alanine + UMP. Its pathway is cell wall biogenesis; peptidoglycan biosynthesis. In terms of biological role, catalyzes the initial step of the lipid cycle reactions in the biosynthesis of the cell wall peptidoglycan: transfers peptidoglycan precursor phospho-MurNAc-pentapeptide from UDP-MurNAc-pentapeptide onto the lipid carrier undecaprenyl phosphate, yielding undecaprenyl-pyrophosphoryl-MurNAc-pentapeptide, known as lipid I. This Solibacter usitatus (strain Ellin6076) protein is Phospho-N-acetylmuramoyl-pentapeptide-transferase.